The sequence spans 142 residues: Small ribosomal subunit protein uS12 (142 aa).

The tract at residues 1–22 (MPTFNQLVRKGRKAAKKKSTAP) is disordered. The segment covering 9–19 (RKGRKAAKKKS) has biased composition (basic residues). Aspartate 102 carries the post-translational modification 3-methylthioaspartic acid.

The protein belongs to the universal ribosomal protein uS12 family. Part of the 30S ribosomal subunit. Contacts proteins S8 and S17. May interact with IF1 in the 30S initiation complex.

Functionally, with S4 and S5 plays an important role in translational accuracy. Interacts with and stabilizes bases of the 16S rRNA that are involved in tRNA selection in the A site and with the mRNA backbone. Located at the interface of the 30S and 50S subunits, it traverses the body of the 30S subunit contacting proteins on the other side and probably holding the rRNA structure together. The combined cluster of proteins S8, S12 and S17 appears to hold together the shoulder and platform of the 30S subunit. This chain is Small ribosomal subunit protein uS12, found in Acetivibrio thermocellus (strain ATCC 27405 / DSM 1237 / JCM 9322 / NBRC 103400 / NCIMB 10682 / NRRL B-4536 / VPI 7372) (Clostridium thermocellum).